The chain runs to 282 residues: Formamidopyrimidine-DNA glycosylase (282 aa).

Pro-2 serves as the catalytic Schiff-base intermediate with DNA. Catalysis depends on Glu-3, which acts as the Proton donor. Lys-61 acts as the Proton donor; for beta-elimination activity in catalysis. DNA-binding residues include His-93, Arg-112, and Lys-158. The segment at 244–278 (DAYGREGEPCRRCGAIMRRDKFMNRSSFYCPRCQP) adopts an FPG-type zinc-finger fold. Catalysis depends on Arg-268, which acts as the Proton donor; for delta-elimination activity.

This sequence belongs to the FPG family. As to quaternary structure, monomer. Zn(2+) serves as cofactor.

It catalyses the reaction Hydrolysis of DNA containing ring-opened 7-methylguanine residues, releasing 2,6-diamino-4-hydroxy-5-(N-methyl)formamidopyrimidine.. The enzyme catalyses 2'-deoxyribonucleotide-(2'-deoxyribose 5'-phosphate)-2'-deoxyribonucleotide-DNA = a 3'-end 2'-deoxyribonucleotide-(2,3-dehydro-2,3-deoxyribose 5'-phosphate)-DNA + a 5'-end 5'-phospho-2'-deoxyribonucleoside-DNA + H(+). Its function is as follows. Involved in base excision repair of DNA damaged by oxidation or by mutagenic agents. Acts as a DNA glycosylase that recognizes and removes damaged bases. Has a preference for oxidized purines, such as 7,8-dihydro-8-oxoguanine (8-oxoG). Has AP (apurinic/apyrimidinic) lyase activity and introduces nicks in the DNA strand. Cleaves the DNA backbone by beta-delta elimination to generate a single-strand break at the site of the removed base with both 3'- and 5'-phosphates. In Mycolicibacterium gilvum (strain PYR-GCK) (Mycobacterium gilvum (strain PYR-GCK)), this protein is Formamidopyrimidine-DNA glycosylase.